We begin with the raw amino-acid sequence, 439 residues long: MATVLIVGKPNVGKSTLFNKLVRKKKAIVEDEEGVTRDPVQDIVEWYGKTFKLVDTCGVFDNPQDIISQKMKEITLNMIREADLVLFVVDGKRGITKEDESLADFLRKSNVDTILVANKAENLREFEREVKPELYSLGFGEPIPVSAEHNINLDTLLETIIKKLEEKGLDLESKPEITDAIKVAIVGRPNVGKSTLFNAILNKERALVSPIPGTTRDPVDEEVFIDGKKYVFVDTAGLRRRSRVEPRTVEKYSNYRVVDSIEKADVVVIVLDATQGITRQDQRIAGLVERRGRASVVVFNKWDLVEHREKRHDEFTKLFREKLYFIDYSPLIFTSADKGWNVDRVIDAINLAYASYTTKVPSSAINSALQKVLAFTNLPRGLKIFFGLQVDIKPPTFLFFVNSIEKIKNPQKVFLRKLIRDYVFPFEGSPIFLKFKRSR.

2 EngA-type G domains span residues 2–168 and 181–357; these read ATVL…EEKG and IKVA…ASYT. GTP contacts are provided by residues 8 to 15, 55 to 59, 118 to 121, 187 to 194, 234 to 238, and 300 to 303; these read GKPNVGKS, DTCGV, NKAE, GRPNVGKS, DTAGL, and NKWD. Residues 358-439 enclose the KH-like domain; the sequence is TKVPSSAINS…PIFLKFKRSR (82 aa).

It belongs to the TRAFAC class TrmE-Era-EngA-EngB-Septin-like GTPase superfamily. EngA (Der) GTPase family. Associates with the 50S ribosomal subunit.

In terms of biological role, GTPase that plays an essential role in the late steps of ribosome biogenesis. This chain is GTPase Der, found in Thermotoga sp. (strain RQ2).